We begin with the raw amino-acid sequence, 554 residues long: Glucose-6-phosphate isomerase (554 aa).

Glu-359 functions as the Proton donor in the catalytic mechanism. Active-site residues include His-390 and Lys-518.

Belongs to the GPI family.

The protein resides in the cytoplasm. It catalyses the reaction alpha-D-glucose 6-phosphate = beta-D-fructose 6-phosphate. It participates in carbohydrate biosynthesis; gluconeogenesis. The protein operates within carbohydrate degradation; glycolysis; D-glyceraldehyde 3-phosphate and glycerone phosphate from D-glucose: step 2/4. Functionally, catalyzes the reversible isomerization of glucose-6-phosphate to fructose-6-phosphate. This Pseudomonas savastanoi pv. phaseolicola (strain 1448A / Race 6) (Pseudomonas syringae pv. phaseolicola (strain 1448A / Race 6)) protein is Glucose-6-phosphate isomerase.